Consider the following 142-residue polypeptide: ATP synthase F(0) complex subunit C3, mitochondrial (142 aa).

The N-terminal 67 residues, 1-67, are a transit peptide targeting the mitochondrion; that stretch reads MFACAKLACT…REFQTSAISR (67 aa). The helical transmembrane segment at 83-103 threads the bilayer; that stretch reads VGVAGSGAGIGTVFGSLIIGY. Position 110 is an N6,N6,N6-trimethyllysine (Lys110). A helical transmembrane segment spans residues 118–138; the sequence is ILGFALSEAMGLFCLMVAFLI.

Belongs to the ATPase C chain family. In terms of assembly, F-type ATPases have 2 components, CF(1) - the catalytic core - and CF(0) - the membrane proton channel. CF(1) has five subunits: alpha(3), beta(3), gamma(1), delta(1), epsilon(1). CF(0) has three main subunits: a, b and c. Interacts with TMEM70 and TMEM242. Post-translationally, trimethylated by ATPSCKMT at Lys-110. Methylation is required for proper incorporation of the C subunit into the ATP synthase complex and mitochondrial respiration.

It is found in the mitochondrion membrane. Its function is as follows. Mitochondrial membrane ATP synthase (F(1)F(0) ATP synthase or Complex V) produces ATP from ADP in the presence of a proton gradient across the membrane which is generated by electron transport complexes of the respiratory chain. F-type ATPases consist of two structural domains, F(1) - containing the extramembraneous catalytic core and F(0) - containing the membrane proton channel, linked together by a central stalk and a peripheral stalk. During catalysis, ATP synthesis in the catalytic domain of F(1) is coupled via a rotary mechanism of the central stalk subunits to proton translocation. Part of the complex F(0) domain. A homomeric c-ring of probably 10 subunits is part of the complex rotary element. The chain is ATP synthase F(0) complex subunit C3, mitochondrial from Homo sapiens (Human).